Reading from the N-terminus, the 108-residue chain is Tetrahydromethanopterin S-methyltransferase subunit B (108 aa).

A helical membrane pass occupies residues 77–99; that stretch reads FQGMFFGFWVTMAVLVLVTILAV.

This sequence belongs to the MtrB family. As to quaternary structure, the complex is composed of 8 subunits; MtrA, MtrB, MtrC, MtrD, MtrE, MtrF, MtrG and MtrH.

The protein localises to the cell membrane. The catalysed reaction is 5-methyl-5,6,7,8-tetrahydromethanopterin + coenzyme M + 2 Na(+)(in) = 5,6,7,8-tetrahydromethanopterin + methyl-coenzyme M + 2 Na(+)(out). It participates in one-carbon metabolism; methanogenesis from CO(2); methyl-coenzyme M from 5,10-methylene-5,6,7,8-tetrahydromethanopterin: step 2/2. Its function is as follows. Part of a complex that catalyzes the formation of methyl-coenzyme M and tetrahydromethanopterin from coenzyme M and methyl-tetrahydromethanopterin. This is an energy-conserving, sodium-ion translocating step. The protein is Tetrahydromethanopterin S-methyltransferase subunit B of Methanococcus maripaludis (strain DSM 14266 / JCM 13030 / NBRC 101832 / S2 / LL).